The primary structure comprises 332 residues: Large ribosomal subunit protein mL44 (332 aa).

Residues 1–30 (MASGLVRLLQQGPRCLLAPVAPKLVPPVRG) constitute a mitochondrion transit peptide. An RNase III domain is found at 86-228 (DLLKTAFVNS…LITQMTGKEL (143 aa)). The region spanning 236–306 (NPMGLLVEEL…ARVALRKLYG (71 aa)) is the DRBM domain.

It belongs to the ribonuclease III family. Mitochondrion-specific ribosomal protein mL44 subfamily. Component of the mitochondrial ribosome large subunit (39S) which comprises a 16S rRNA and about 50 distinct proteins.

The protein resides in the mitochondrion. Component of the 39S subunit of mitochondrial ribosome. May have a function in the assembly/stability of nascent mitochondrial polypeptides exiting the ribosome. The chain is Large ribosomal subunit protein mL44 (MRPL44) from Pongo abelii (Sumatran orangutan).